Reading from the N-terminus, the 593-residue chain is Prospero homeobox protein 2 (593 aa).

Disordered stretches follow at residues 24 to 48 (CMDQ…QLPS), 79 to 130 (SPSS…GGTR), 153 to 199 (TEPR…KDLC), 260 to 284 (QERS…SAYK), 298 to 333 (PQAG…QSPL), and 356 to 388 (GRGP…PWGL). A compositionally biased stretch (basic and acidic residues) spans 87-99 (RARESLRCPEKGR). Positions 167 to 181 (PRSSPRARPRNSCSS) are enriched in low complexity. The span at 363 to 380 (WSGSPPQDAAFQSHTSPE) shows a compositional bias: polar residues. Positions 433–491 (QEGLSPGHLKKAKLMFFFTRYPSSSLLKAYFPDVQFNRCITSQMIKWFSNFREFYYIQM) constitute a Prospero-type homeo domain. The segment at 433–591 (QEGLSPGHLK…KSPSFLPGLF (159 aa)) is homeo-Prospero. Residues 492 to 591 (EKYARQALSD…KSPSFLPGLF (100 aa)) form the Prospero domain.

The protein belongs to the Prospero homeodomain family. Expressed in testis.

The protein resides in the nucleus. Functionally, transcription regulator. Does not seem to be essential for embryonic development and postnatal survival. This is Prospero homeobox protein 2 (Prox2) from Mus musculus (Mouse).